The following is a 312-amino-acid chain: Chitin deacetylase 2 (312 aa).

The N-terminal stretch at Met-1–Arg-44 is a signal peptide. An intrachain disulfide couples Cys-117 to Cys-300. Residues Ser-118–Ile-307 form the NodB homology domain. The active-site Proton acceptor is Asp-125. Asp-125 provides a ligand contact to acetate. Asp-126 is a binding site for Co(2+). Asn-142 carries an N-linked (GlcNAc...) asparagine glycan. The Co(2+) site is built by His-172 and His-176. 2 N-linked (GlcNAc...) asparagine glycosylation sites follow: Asn-181 and Asn-199. An acetate-binding site is contributed by Tyr-213. N-linked (GlcNAc...) asparagine glycosylation is found at Asn-246 and Asn-263. The active-site Proton donor is His-273.

The protein belongs to the polysaccharide deacetylase family. As to quaternary structure, monomer. The cofactor is Co(2+). N-glycosylated.

The protein localises to the prospore. The catalysed reaction is [(1-&gt;4)-N-acetyl-beta-D-glucosaminyl](n) + n H2O = chitosan + n acetate. In terms of biological role, hydrolyzes the N-acetamido groups of N-acetyl-D-glucosamine residues in chitin to form chitosan and acetate. Chitosan is a component of the spore wall. The chain is Chitin deacetylase 2 from Saccharomyces cerevisiae (strain ATCC 204508 / S288c) (Baker's yeast).